The primary structure comprises 147 residues: MDIKNMRNVIVSLSLVFGLLFTVSGIIEIIIGLYSILGFKIELPLFVGDVFGGLALLAVGIAYFLGVKKAVDRDIKAVSYLFTASIIGLGIGVIAFLILISDAIGFLLGFEDWADWGFFNDLTVYLVLGMLAIIPYRIAKIISSSTT.

4 helical membrane-spanning segments follow: residues 13–33 (LSLV…IIGL), 45–65 (LFVG…AYFL), 80–100 (YLFT…LILI), and 116–136 (WGFF…IIPY).

The protein resides in the cell membrane. This is an uncharacterized protein from Methanocaldococcus jannaschii (strain ATCC 43067 / DSM 2661 / JAL-1 / JCM 10045 / NBRC 100440) (Methanococcus jannaschii).